The chain runs to 393 residues: 5-amino-6-(D-ribitylamino)uracil--L-tyrosine 4-hydroxyphenyl transferase (393 aa).

The Radical SAM core domain maps to 67–322 (VTYVINRNIN…GQWIVNHQPS (256 aa)). [4Fe-4S] cluster-binding residues include cysteine 81, cysteine 85, and cysteine 88.

Belongs to the radical SAM superfamily. CofH family. As to quaternary structure, consists of two subunits, CofG and CofH. [4Fe-4S] cluster serves as cofactor.

It catalyses the reaction 5-amino-6-(D-ribitylamino)uracil + L-tyrosine + S-adenosyl-L-methionine = 5-amino-5-(4-hydroxybenzyl)-6-(D-ribitylimino)-5,6-dihydrouracil + 2-iminoacetate + 5'-deoxyadenosine + L-methionine + H(+). Its pathway is cofactor biosynthesis; coenzyme F0 biosynthesis. Its function is as follows. Catalyzes the radical-mediated synthesis of 5-amino-5-(4-hydroxybenzyl)-6-(D-ribitylimino)-5,6-dihydrouracil from 5-amino-6-(D-ribitylamino)uracil and L-tyrosine. The protein is 5-amino-6-(D-ribitylamino)uracil--L-tyrosine 4-hydroxyphenyl transferase of Thermosynechococcus vestitus (strain NIES-2133 / IAM M-273 / BP-1).